A 122-amino-acid polypeptide reads, in one-letter code: Large ribosomal subunit protein uL14 (122 aa).

Belongs to the universal ribosomal protein uL14 family. As to quaternary structure, part of the 50S ribosomal subunit. Forms a cluster with proteins L3 and L19. In the 70S ribosome, L14 and L19 interact and together make contacts with the 16S rRNA in bridges B5 and B8.

Functionally, binds to 23S rRNA. Forms part of two intersubunit bridges in the 70S ribosome. This Rhizobium johnstonii (strain DSM 114642 / LMG 32736 / 3841) (Rhizobium leguminosarum bv. viciae) protein is Large ribosomal subunit protein uL14.